Here is a 332-residue protein sequence, read N- to C-terminus: Potassium channel subfamily K member 17 (332 aa).

Residues 1–20 are Cytoplasmic-facing; that stretch reads MYRPRARAAPEGRVRGCAVP. A helical membrane pass occupies residues 21-43; it reads STVLLLLAYLAYLALGTGVFWTL. Residues asparagine 65 and asparagine 94 are each glycosylated (N-linked (GlcNAc...) asparagine). Positions 106–124 form an intramembrane region, pore-forming; sequence SFFFSVSTITTIGYGNLSP. 4 residues coordinate K(+): threonine 116, isoleucine 117, glycine 118, and tyrosine 119. Residues 116-121 form a selectivity filter 1 region; it reads TIGYGN. Residues 128 to 148 form a helical membrane-spanning segment; the sequence is AARLFCIFFALVGIPLNLVVL. At 149–179 the chain is on the cytoplasmic side; the sequence is NRLGHLMQQGVNHWASRLGGTWQDPDKARWL. A helical transmembrane segment spans residues 180-200; that stretch reads AGSGALLSGLLLFLLLPPLLF. Positions 211 to 230 form an intramembrane region, pore-forming; the sequence is GFYFAFITLSTVGFGDYVIG. K(+)-binding residues include threonine 221, valine 222, glycine 223, and phenylalanine 224. Residues 221-226 form a selectivity filter 2 region; that stretch reads TVGFGD. Residues 244 to 264 form a helical membrane-spanning segment; sequence MVSLWILFGMAWLALIIKLIL. Residues 265 to 332 lie on the Cytoplasmic side of the membrane; the sequence is SQLETPGRVC…AHAAGCGKDS (68 aa). Residues 287-312 form a disordered region; that stretch reads SQSWRQGPDREPESHSPQQGCYPEGP.

It belongs to the two pore domain potassium channel (TC 1.A.1.8) family. In terms of assembly, homodimer; disulfide-linked. Heterodimer with KCNK5 and KCNK16. As to expression, widely expressed. Highly expressed in aorta and coronary artery. Expressed in pancreas, in both endocrine (alpha, beta, gamma, delta, and epsilon) and exocrine (acinar and ductal) cells.

It localises to the cell membrane. It carries out the reaction K(+)(in) = K(+)(out). The catalysed reaction is Rb(+)(in) = Rb(+)(out). It catalyses the reaction Cs(+)(in) = Cs(+)(out). With respect to regulation, inhibited by Ba(2+), quinidine, chloroform and halothane. Activated at alkaline pH. Activated by quinine and isoflurane. Its function is as follows. K(+) channel that conducts voltage-dependent outward rectifying currents upon membrane depolarization. Voltage sensing is coupled to K(+) electrochemical gradient in an 'ion flux gating' mode where outward but not inward ion flow opens the gate. Homo- and heterodimerizes to form functional channels with distinct regulatory and gating properties. Present in the cardiac conduction system where it may regulate action potential duration and beating frequency of cardiac myocytes. Permeable to other monovalent cations such as Rb(+) and Cs(+). This chain is Potassium channel subfamily K member 17, found in Homo sapiens (Human).